Here is a 361-residue protein sequence, read N- to C-terminus: Bis(monoacylglycero)phosphate synthase CLN5 (361 aa).

Residues Met-1–Ala-21 show a composition bias toward gly residues. The interval Met-1–Glu-24 is disordered. The Cytoplasmic portion of the chain corresponds to Met-1 to Trp-30. A helical; Signal-anchor for type II membrane protein transmembrane segment spans residues Ala-31–Gly-48. Residues Asp-49 to Leu-361 are Lumenal-facing. Disulfide bonds link Cys-72–Cys-161 and Cys-79–Cys-167. His-119 (proton acceptor) is an active-site residue. Asn-132, Asn-145, Asn-180, and Asn-205 each carry an N-linked (GlcNAc...) asparagine glycan. The active-site Nucleophile; Acyl-thioester intermediate is Cys-233. Asn-257, Asn-273, and Asn-283 each carry an N-linked (GlcNAc...) asparagine glycan. A membrane-anchoring region spans residues Phe-306 to Tyr-345. Asn-355 carries N-linked (GlcNAc...) asparagine glycosylation.

It belongs to the CLN5 family. In terms of assembly, multimer. Interacts with SORT1, RAB5A and RAB7A. Interacts with PPT1, TPP1, CLN3, CLN6, CLN8, ATP5F1A and ATP5F1B. In terms of processing, N-glycosylated with both high mannose and complex type sugars. Glycosylation is important for proper folding and trafficking to the lysosomes. The type II membrane signal anchor is proteolytically cleaved to produce a mature form that is transported to the lysosomes (Bis(monoacylglycero)phosphate synthase CLN5, secreted form). Post-translationally, can undergo proteolytic cleavage at the C-terminus, probably by a cysteine protease and may involve the removal of approximately 10-15 residues from the C-terminal end.

It localises to the lysosome. The protein localises to the membrane. It carries out the reaction S-hexadecanoyl-L-cysteinyl-[protein] + H2O = L-cysteinyl-[protein] + hexadecanoate + H(+). The enzyme catalyses 2 1-acyl-sn-glycero-3-phospho-(1'-sn-glycerol) = 1-acyl-sn-glycero-3-phospho-(3'-acyl-sn-1'-glycerol) + sn-glycero-3-phospho-(1'-sn-glycerol). The catalysed reaction is 2 1-(9Z-octadecenoyl)-sn-glycero-3-phospho-(1'-sn-glycerol) = 1-(9Z-octadecenoyl)-sn-glycero-3-phospho-(3'-(9Z-octadecenoyl)-1'-sn-glycerol) + sn-glycero-3-phospho-(1'-sn-glycerol). It catalyses the reaction 2 1-octadecanoyl-sn-glycero-3-phospho-(1'-sn-glycerol) = 1-octadecanoyl-sn-glycero-3-phospho-(3'-octadecanoyl-1'-sn-glycerol) + sn-glycero-3-phospho-(1'-sn-glycerol). It carries out the reaction 2 1-hexadecanoyl-sn-glycero-3-phospho-(1'-sn-glycerol) = 1-hexadecanoyl-sn-glycero-3-phospho-(3'-hexadecanoyl-1'-sn-glycerol) + sn-glycero-3-phospho-(1'-sn-glycerol). The enzyme catalyses 2 1-tetradecanoyl-sn-glycero-3-phospho-(1'-sn-glycerol) = 1-tetradecanoyl-sn-glycero-3-phospho-(3'-tetradecanoyl-1'-sn-glycerol) + sn-glycero-3-phospho-(1'-sn-glycerol). Its function is as follows. Catalyzes the synthesis of bis(monoacylglycero)phosphate (BMP) via transacylation of 2 molecules of lysophosphatidylglycerol (LPG). BMP also known as lysobisphosphatidic acid plays a key role in the formation of intraluminal vesicles and in maintaining intracellular cholesterol homeostasis. Can use only LPG as the exclusive lysophospholipid acyl donor for base exchange and displays BMP synthase activity towards various LPGs (LPG 14:0, LPG 16:0, LPG 18:0, LPG 18:1) with a higher preference for longer chain lengths. Plays a role in influencing the retrograde trafficking of lysosomal sorting receptors SORT1 and IGF2R from the endosomes to the trans-Golgi network by controlling the recruitment of retromer complex to the endosomal membrane. Regulates the localization and activation of RAB7A which is required to recruit the retromer complex to the endosomal membrane. Exhibits palmitoyl protein thioesterase (S-depalmitoylation) activity in vitro and most likely plays a role in protein S-depalmitoylation. The polypeptide is Bis(monoacylglycero)phosphate synthase CLN5 (CLN5) (Ovis aries (Sheep)).